Here is a 181-residue protein sequence, read N- to C-terminus: Probable inactive acireductone dioxygenase 2 (181 aa).

Belongs to the acireductone dioxygenase (ARD) family.

It is found in the cytoplasm. It localises to the nucleus. Its function is as follows. Probable inactive acireductone dioxygenase. The chain is Probable inactive acireductone dioxygenase 2 from Sorghum bicolor (Sorghum).